Here is a 243-residue protein sequence, read N- to C-terminus: Carboxy-S-adenosyl-L-methionine synthase (243 aa).

Residues Tyr39, 64–66 (GCS), 89–90 (DN), 117–118 (DL), Asn132, and Arg199 each bind S-adenosyl-L-methionine.

It belongs to the class I-like SAM-binding methyltransferase superfamily. Cx-SAM synthase family. Homodimer.

The enzyme catalyses prephenate + S-adenosyl-L-methionine = carboxy-S-adenosyl-L-methionine + 3-phenylpyruvate + H2O. In terms of biological role, catalyzes the conversion of S-adenosyl-L-methionine (SAM) to carboxy-S-adenosyl-L-methionine (Cx-SAM). The polypeptide is Carboxy-S-adenosyl-L-methionine synthase (Pseudoalteromonas atlantica (strain T6c / ATCC BAA-1087)).